Here is a 77-residue protein sequence, read N- to C-terminus: TSC22 domain family protein 3 (77 aa).

N-acetylmethionine is present on methionine 1. The leucine-zipper stretch occupies residues 19–40 (LKEQIRELVEKNSQLERENTLL). The interval 41 to 77 (KTLASPEQLEKFQSRLSPEEPAPETPEAPEAPGGSAV) is disordered. Serine 45 is modified (phosphoserine). Low complexity predominate over residues 68–77 (APEAPGGSAV).

The protein belongs to the TSC-22/Dip/Bun family. Can form homodimers, however it is likely to function as a monomer. Interacts with AP1 and NFKB1. Interacts with MYOD1. Interacts with HDAC1; this interaction affects HDAC1 activity on MYOG promoter and thus inhibits MYOD1 transcriptional activity.

It localises to the cytoplasm. The protein resides in the nucleus. Its function is as follows. Protects T-cells from IL2 deprivation-induced apoptosis through the inhibition of FOXO3A transcriptional activity that leads to the down-regulation of the pro-apoptotic factor BCL2L11. In macrophages, plays a role in the anti-inflammatory and immunosuppressive effects of glucocorticoids and IL10. In T-cells, inhibits anti-CD3-induced NFKB1 nuclear translocation. In vitro, suppresses AP1 and NFKB1 DNA-binding activities. Inhibits myogenic differentiation and mediates anti-myogenic effects of glucocorticoids by binding and regulating MYOD1 and HDAC1 transcriptional activity resulting in reduced expression of MYOG. In Sus scrofa (Pig), this protein is TSC22 domain family protein 3 (TSC22D3).